Here is a 419-residue protein sequence, read N- to C-terminus: Sphingomyelin phosphodiesterase 2 (419 aa).

Glutamate 49 provides a ligand contact to Mg(2+). The Proton acceptor role is filled by histidine 272. 2 helical membrane-spanning segments follow: residues 326–346 (FSGY…VLAA) and 354–374 (AIIL…VYLF).

Belongs to the neutral sphingomyelinase family. Mg(2+) serves as cofactor. Although widely expressed in all tissues examined, except the spleen, high enzymatic activity occurs only in the brain.

The protein resides in the cell membrane. It catalyses the reaction a sphingomyelin + H2O = phosphocholine + an N-acylsphing-4-enine + H(+). It carries out the reaction an N-(acyl)-sphingosylphosphocholine + H2O = an N-acyl-sphingoid base + phosphocholine + H(+). The enzyme catalyses 1-O-octadecyl-sn-glycero-3-phosphocholine + H2O = 1-O-octadecyl-sn-glycerol + phosphocholine + H(+). The catalysed reaction is 1-hexadecanoyl-sn-glycero-3-phosphocholine + H2O = 1-hexadecanoyl-sn-glycerol + phosphocholine + H(+). It catalyses the reaction a sphingosylphosphocholine + H2O = a sphingoid base + phosphocholine + H(+). It carries out the reaction 1-O-hexadecyl-sn-glycero-3-phosphocholine + H2O = 1-O-hexadecyl-sn-glycerol + phosphocholine + H(+). The protein operates within lipid metabolism; sphingolipid metabolism. Its activity is regulated as follows. Activated by arachidonic acid. In terms of biological role, catalyzes, at least in vitro, the hydrolysis of sphingomyelin to form ceramide and phosphocholine. Also hydrolyzes 1-O-alkyl-2-lyso-sn-glycero-3-phosphocholine (lyso-platelet-activating factor) in vivo. Also acts on 1-acyl-2-lyso-sn-glycero-3-phosphocholine (lyso-PC) and sphingosylphosphocholine. The polypeptide is Sphingomyelin phosphodiesterase 2 (Mus musculus (Mouse)).